The primary structure comprises 410 residues: Multifunctional CCA protein (410 aa).

Residues Gly-8 and Arg-11 each contribute to the ATP site. CTP is bound by residues Gly-8 and Arg-11. Positions 21 and 23 each coordinate Mg(2+). Positions 91, 137, and 140 each coordinate ATP. 3 residues coordinate CTP: Arg-91, Arg-137, and Arg-140. Residues 228-329 (TGIHSLMALR…VKLLEQVDAF (102 aa)) form the HD domain.

Belongs to the tRNA nucleotidyltransferase/poly(A) polymerase family. Bacterial CCA-adding enzyme type 1 subfamily. As to quaternary structure, monomer. Can also form homodimers and oligomers. Mg(2+) is required as a cofactor. Requires Ni(2+) as cofactor.

The catalysed reaction is a tRNA precursor + 2 CTP + ATP = a tRNA with a 3' CCA end + 3 diphosphate. It catalyses the reaction a tRNA with a 3' CCA end + 2 CTP + ATP = a tRNA with a 3' CCACCA end + 3 diphosphate. Catalyzes the addition and repair of the essential 3'-terminal CCA sequence in tRNAs without using a nucleic acid template. Adds these three nucleotides in the order of C, C, and A to the tRNA nucleotide-73, using CTP and ATP as substrates and producing inorganic pyrophosphate. tRNA 3'-terminal CCA addition is required both for tRNA processing and repair. Also involved in tRNA surveillance by mediating tandem CCA addition to generate a CCACCA at the 3' terminus of unstable tRNAs. While stable tRNAs receive only 3'-terminal CCA, unstable tRNAs are marked with CCACCA and rapidly degraded. In Legionella pneumophila (strain Paris), this protein is Multifunctional CCA protein.